The following is a 30-amino-acid chain: Cysteine-rich venom protein mossambin (30 aa).

The segment at 1–30 (NVDFNSESTRRKKKQNEIVDLHNSLRRTVN) is disordered.

Belongs to the CRISP family. Contains 8 disulfide bonds. In terms of tissue distribution, expressed by the venom gland.

Its subcellular location is the secreted. Its function is as follows. Inhibits calcium-activated potassium channels (KCa), voltage-gated potassium channel (Kv), and the calcium release channel/ryanodine receptor (RyR). The chain is Cysteine-rich venom protein mossambin from Naja mossambica (Mozambique spitting cobra).